We begin with the raw amino-acid sequence, 159 residues long: Transcriptional repressor NrdR (159 aa).

Residues 1–26 (MRCPFCAHDNSQVKDSRPSEDNTSIR) form a disordered region. A zinc finger spans residues 3 to 34 (CPFCAHDNSQVKDSRPSEDNTSIRRRRQCEGC). Residues 11 to 24 (SQVKDSRPSEDNTS) show a composition bias toward basic and acidic residues. In terms of domain architecture, ATP-cone spans 49 to 139 (VVVVKSGERR…VYRDFTEARD (91 aa)).

It belongs to the NrdR family. Requires Zn(2+) as cofactor.

Negatively regulates transcription of bacterial ribonucleotide reductase nrd genes and operons by binding to NrdR-boxes. The sequence is that of Transcriptional repressor NrdR from Novosphingobium aromaticivorans (strain ATCC 700278 / DSM 12444 / CCUG 56034 / CIP 105152 / NBRC 16084 / F199).